A 184-amino-acid chain; its full sequence is UPF0669 protein C6orf120 homolog (184 aa).

A signal peptide spans 1–23; it reads MAAPWTGALLLLLASQAVSSAQA. Residue Asn47 is glycosylated (N-linked (GlcNAc...) asparagine).

Belongs to the UPF0669 family.

It is found in the secreted. In terms of biological role, may be involved in induction of apoptosis in CD4(+) T-cells, but not CD8(+) T-cells or hepatocytes. The protein is UPF0669 protein C6orf120 homolog of Bos taurus (Bovine).